A 184-amino-acid chain; its full sequence is UPF0149 protein PputGB1_5261 (184 aa).

Belongs to the UPF0149 family.

This is UPF0149 protein PputGB1_5261 from Pseudomonas putida (strain GB-1).